Here is a 596-residue protein sequence, read N- to C-terminus: DNA primase (596 aa).

The CHC2-type zinc finger occupies 41–65; that stretch reads CPFHHEKTPSFSVSQDKQIYKCFGC. One can recognise a Toprim domain in the interval 255 to 336; it reads DTIIIVEGYM…DIKIIKIPDG (82 aa). The Mg(2+) site is built by Glu261, Asp305, and Asp307.

It belongs to the DnaG primase family. In terms of assembly, monomer. Interacts with DnaB. The cofactor is Zn(2+). Mg(2+) serves as cofactor.

It carries out the reaction ssDNA + n NTP = ssDNA/pppN(pN)n-1 hybrid + (n-1) diphosphate.. In terms of biological role, RNA polymerase that catalyzes the synthesis of short RNA molecules used as primers for DNA polymerase during DNA replication. The protein is DNA primase of Clostridium acetobutylicum (strain ATCC 824 / DSM 792 / JCM 1419 / IAM 19013 / LMG 5710 / NBRC 13948 / NRRL B-527 / VKM B-1787 / 2291 / W).